The chain runs to 84 residues: Conotoxin Tx8.1 (84 aa).

The first 19 residues, 1–19, serve as a signal peptide directing secretion; that stretch reads LKMGAMFVLLLLFTLASSH. The propeptide occupies 20 to 44; the sequence is REGDIQARKTHLKSDFYRTLPRFAR.

It belongs to the conotoxin S superfamily. Contains 5 disulfide bonds. In terms of tissue distribution, expressed by the venom duct.

The protein resides in the secreted. The protein is Conotoxin Tx8.1 of Conus textile (Cloth-of-gold cone).